The sequence spans 243 residues: Beta-glucanase (243 aa).

The signal sequence occupies residues 1–27 (MSYRVKRMLMLLVTGLFLSLSTFAASA). Positions 29-243 (AQTGGSFYEP…SLHWVRYTKR (215 aa)) constitute a GH16 domain. The cysteines at positions 61 and 90 are disulfide-linked. Glu134 acts as the Nucleophile in catalysis. The active-site Proton donor is Glu138.

This sequence belongs to the glycosyl hydrolase 16 family.

It carries out the reaction Hydrolysis of (1-&gt;4)-beta-D-glucosidic linkages in beta-D-glucans containing (1-&gt;3)- and (1-&gt;4)-bonds.. This chain is Beta-glucanase (bg1), found in Bacillus licheniformis.